A 262-amino-acid chain; its full sequence is 3-methyl-2-oxobutanoate hydroxymethyltransferase (262 aa).

Mg(2+)-binding residues include Asp42 and Asp81. 3-methyl-2-oxobutanoate is bound by residues 42–43 (DS), Asp81, and Lys110. Glu112 provides a ligand contact to Mg(2+). Residue Glu180 is the Proton acceptor of the active site.

The protein belongs to the PanB family. Homodecamer; pentamer of dimers. Mg(2+) serves as cofactor.

It localises to the cytoplasm. It catalyses the reaction 3-methyl-2-oxobutanoate + (6R)-5,10-methylene-5,6,7,8-tetrahydrofolate + H2O = 2-dehydropantoate + (6S)-5,6,7,8-tetrahydrofolate. Its pathway is cofactor biosynthesis; (R)-pantothenate biosynthesis; (R)-pantoate from 3-methyl-2-oxobutanoate: step 1/2. In terms of biological role, catalyzes the reversible reaction in which hydroxymethyl group from 5,10-methylenetetrahydrofolate is transferred onto alpha-ketoisovalerate to form ketopantoate. This is 3-methyl-2-oxobutanoate hydroxymethyltransferase from Legionella pneumophila (strain Corby).